Here is a 377-residue protein sequence, read N- to C-terminus: Lactosylceramide 1,3-N-acetyl-beta-D-glucosaminyltransferase (377 aa).

At 1-14 (MRVFVSSRRVKRWQ) the chain is on the cytoplasmic side. A helical; Signal-anchor for type II membrane protein membrane pass occupies residues 15–35 (FFHLFAICFILSFMVFWGPIN). At 36-377 (NYIMSHMKSY…NSYPCRAAFA (342 aa)) the chain is on the lumenal side. N-linked (GlcNAc...) asparagine glycosylation is present at Asn58.

This sequence belongs to the glycosyltransferase 31 family.

The protein resides in the golgi apparatus membrane. It carries out the reaction a beta-D-Gal-(1-&gt;4)-beta-D-Glc-(1&lt;-&gt;1)-Cer(d18:1(4E)) + UDP-N-acetyl-alpha-D-glucosamine = a beta-D-GlcNAc-(1-&gt;3)-beta-D-Gal-(1-&gt;4)-beta-D-Glc-(1&lt;-&gt;1)-Cer(d18:1(4E)) + UDP + H(+). The catalysed reaction is a neolactoside nLc4Cer(d18:1(4E)) + UDP-N-acetyl-alpha-D-glucosamine = a neolactoside IV(3)-beta-GlcNAc-nLc4Cer(d18:1(4E)) + UDP + H(+). The protein operates within protein modification; protein glycosylation. Beta-1,3-N-acetylglucosaminyltransferase that plays a key role in the synthesis of lacto- or neolacto-series carbohydrate chains on glycolipids, notably by participating in biosynthesis of HNK-1 and Lewis X carbohydrate structures. Has strong activity toward lactosylceramide (LacCer) and neolactotetraosylceramide (nLc(4)Cer; paragloboside), resulting in the synthesis of Lc(3)Cer and neolactopentaosylceramide (nLc(5)Cer), respectively. Probably plays a central role in regulating neolacto-series glycolipid synthesis during embryonic development. The protein is Lactosylceramide 1,3-N-acetyl-beta-D-glucosaminyltransferase of Rattus norvegicus (Rat).